We begin with the raw amino-acid sequence, 226 residues long: 7-cyano-7-deazaguanine synthase (226 aa).

7–17 (ISGGMDSLVVA) is a binding site for ATP. Zn(2+) contacts are provided by C187, C195, C198, and C201.

The protein belongs to the QueC family. Requires Zn(2+) as cofactor.

It carries out the reaction 7-carboxy-7-deazaguanine + NH4(+) + ATP = 7-cyano-7-deazaguanine + ADP + phosphate + H2O + H(+). The protein operates within purine metabolism; 7-cyano-7-deazaguanine biosynthesis. Its function is as follows. Catalyzes the ATP-dependent conversion of 7-carboxy-7-deazaguanine (CDG) to 7-cyano-7-deazaguanine (preQ(0)). In Chlorobium phaeobacteroides (strain BS1), this protein is 7-cyano-7-deazaguanine synthase.